We begin with the raw amino-acid sequence, 517 residues long: GMP synthase [glutamine-hydrolyzing] (517 aa).

In terms of domain architecture, Glutamine amidotransferase type-1 spans 4 to 193 (KIIILDFGSQ…VVDICGGKQD (190 aa)). Catalysis depends on Cys-79, which acts as the Nucleophile. Catalysis depends on residues His-167 and Glu-169. Residues 194 to 382 (WSAASFIETT…LGMPEHLITR (189 aa)) form the GMPS ATP-PPase domain. Position 221 to 227 (221 to 227 (SGGVDSS)) interacts with ATP.

In terms of assembly, homodimer.

It catalyses the reaction XMP + L-glutamine + ATP + H2O = GMP + L-glutamate + AMP + diphosphate + 2 H(+). Its pathway is purine metabolism; GMP biosynthesis; GMP from XMP (L-Gln route): step 1/1. Its function is as follows. Catalyzes the synthesis of GMP from XMP. The sequence is that of GMP synthase [glutamine-hydrolyzing] from Phocaeicola vulgatus (strain ATCC 8482 / DSM 1447 / JCM 5826 / CCUG 4940 / NBRC 14291 / NCTC 11154) (Bacteroides vulgatus).